Here is a 1772-residue protein sequence, read N- to C-terminus: MKVIGLLFSFVFFAIKCKSETIEVYNDLIQKLEKLESLSVDGLELFQKSQVIINATQPTETIDPFTNHNFAQQVQDFVTKFEGLGFTEQTELVNLIKALTPNRYGVKYLIESKEEFNGLMHAINFYYDVLRDKLNDMCANNYCEIPEHLKISEEETEMLKKVILGYRKPIENIQDDIEKLEIYIERNKETVAALNALIAEETKKIQPEGNEDCNDASCDSDKYNKKKPIYQAMYNVIFYKKQLAEIQKVVEVLEKRVSTLKKNDAIKPLWQQIEVLNAAPVVTAETQIVTGGQSSTEPGSGGSSASGTSSSGQASAGTGVEQANTVASVTVTPSVGQNGEASTNPQTAQVQPVPTLTLEEKQKKIAGLYAQIKEIAKTIKFNLEGIFVDPIELEYFKKEKKKESCNLSTSSCKKNKASETIIPLTIRYPNGISYPLPENDVYNKIANNAAETTYGDLTHPDNTPLTGDLATNEQARKDLIKAIKKKIKAEEKKLETLKTNYDNKLTEFNQQKTPFKEAAKEFYESKFRNKLTSEIFEKFKTKRDEYMTKKTELNTCEYGNTKELINKLNKQLNYLQDYSLRKDIISNEIEYFSNKKKELQYNINRLAEAVQAKQNVLVASKDVPLSTLVELQIQKSLLTKQIEQLNKTEVSLNKAQLKDKLYVPKTYGNEGKPEPYYLIAVKKEVDRLAQFIPKIESMIAKEKERMEQGPAITGESEEVPSGPSAESSTDRSTQSSTSSSSSSSSTPAAAESSSATLPEAPAPAEAASPSTEASEETTIPPTTQETQPSQAASSTTPAKPVMTKLYYLEKLQKFLVFSYSCHKYVLLQNSTINKDALSKYALTSEEDKIRTLKRCSELDVLLAIQNNMPTMYSLYESIVDGLQNIYTELYEKEMMYHIYKLKDENPSIKSLLVKAGVIEPEPVAAPTPVTPAATEQQQQQATPDVQSDAPAPSDVSQQPETPVTSTTPEVTTSTEASSSAPGEGTPSGEAGASGTEGATASNAATPAGTSASGSAASNASTTSDVTPPAAAAAVPSTSTPAPAQPPAANSQSGNPDSGIRSRAESEEDMPADDFELDNLYKSYLQQIDGNNTEFINFIKSKKELIKALTPEKVNQLYLEIAHLKELSEHYYDRYSTYKLKLERLYNKHEQIQLTNRQIRDLSILKARLLKRKQTLNGVFYILNGYVNFFNKRREAEKQYVDNALKNTDMLLKYYKARTKYFTSEAVPLKTLSKASLDRESNYLKIEKFRAYSRLELRLKKNINLGKERISYVSGGLHHVFEEFKELIKDKDYTGKKNPDNAPEVTNAFEQYKELLPKGVTVSTPAVAVTTTLAADAPATPEGAVPGAVPGAVPGAVPGAVPGAVPGSGTDTRVAGSSVDDNEDDDIYQIASGQSEDAPEKDILSEFTNESLYVYTKRLGSTYKSLKKHMLREFSTIKEDMTNGLNNKSQKRNDFLEVLSHELDLFKDLSTNKYVIRNPYQLLDNDKKDKQIVNLKYATKGINEDIETTTDGIKFFNKMVELYNTQLAAVKEQIATIEAETNDTNKEEKKKYIPILEDLKGLYETVIGQAEEYSEELQNRLDNYKNEKAEFEILTKNLEKYIQIDEKLDEFVEHAENNKHIASIALNNLNKSGLVGEGESKKILAKMLNMDGMDLLGVDPKHVCVDTRDIPKNAGCFRDDNGTEEWRCLLGYKKGEGNTCVENNNPTCDINNGGCDPTASCQNAESTENSKKIICTCKEPTPNAYYEGVFCSSSSFMGLSILLIITLIVFNIF.

The signal sequence occupies residues 1–18 (MKVIGLLFSFVFFAIKCK). An N-linked (GlcNAc...) asparagine glycan is attached at Asn-54. Positions 290–319 (TGGQSSTEPGSGGSSASGTSSSGQASAGTG) are disordered. Positions 305-319 (ASGTSSSGQASAGTG) are enriched in low complexity. N-linked (GlcNAc...) asparagine glycans are attached at residues Asn-406 and Asn-646. Positions 703 to 796 (KERMEQGPAI…QPSQAASSTT (94 aa)) are disordered. Residues 724–796 (SAESSTDRST…QPSQAASSTT (73 aa)) are compositionally biased toward low complexity. Residue Asn-829 is glycosylated (N-linked (GlcNAc...) asparagine). The segment at 924-1070 (AAPTPVTPAA…SRAESEEDMP (147 aa)) is disordered. 2 stretches are compositionally biased toward low complexity: residues 930–946 (TPAATEQQQQQATPDVQ) and 956–1052 (SQQP…NSQS). 2 N-linked (GlcNAc...) asparagine glycosylation sites follow: Asn-1018 and Asn-1090. Residues 1362–1383 (GAVPGSGTDTRVAGSSVDDNED) are disordered. Asn-1408, Asn-1446, Asn-1541, and Asn-1629 each carry an N-linked (GlcNAc...) asparagine glycan. EGF-like domains are found at residues 1661-1703 (HVCV…VENN) and 1704-1752 (NPTC…FCSS). Cys-1663 and Cys-1675 are joined by a disulfide. N-linked (GlcNAc...) asparagine glycosylation is present at Asn-1680. 4 disulfide bridges follow: Cys-1687-Cys-1699, Cys-1707-Cys-1720, Cys-1714-Cys-1734, and Cys-1736-Cys-1750. Ser-1751 carries the GPI-anchor amidated serine lipid modification. Positions 1752–1772 (SSSFMGLSILLIITLIVFNIF) are cleaved as a propeptide — removed in mature form.

In terms of assembly, forms a complex composed of subunits p83, p30, p38, and p42 which remain non-covalently associated; the complex is formed at the merozoite surface prior to egress from host erythrocytes. In terms of processing, the p230 precursor is cleaved by SUB1 prior to merozoite egress into 4 subunits p83, p30, p38, and p42 which remain non-covalently associated. In a second processing step during erythrocyte invasion, p42 is cleaved by SUB2 into p33 and p19; the latter remains attached to the merozoite surface via its GPI-anchor and stays on the surface during the subsequent ring stage.

The protein resides in the cell membrane. Its subcellular location is the secreted. During the asexual blood stage, involved in merozoite egress from host erythrocytes possibly via its interaction with the host cytoskeleton protein spectrin resulting in the destabilization of the host cytoskeleton and thus leading to erythrocyte cell membrane rupture. Involved in the binding to host erythrocytes and is required for host erythrocyte invasion. In Plasmodium yoelii yoelii, this protein is Merozoite surface protein 1.